The primary structure comprises 753 residues: 5-methyltetrahydropteroyltriglutamate--homocysteine methyltransferase (753 aa).

5-methyltetrahydropteroyltri-L-glutamate is bound by residues 17–20 (RELK) and K117. L-homocysteine contacts are provided by residues 431–433 (IGS) and E484. L-methionine is bound by residues 431 to 433 (IGS) and E484. 5-methyltetrahydropteroyltri-L-glutamate-binding positions include 515–516 (RC) and W561. D599 serves as a coordination point for L-homocysteine. Residue D599 participates in L-methionine binding. Residue E605 coordinates 5-methyltetrahydropteroyltri-L-glutamate. The Zn(2+) site is built by H641, C643, and E665. H694 (proton donor) is an active-site residue. C726 contacts Zn(2+).

It belongs to the vitamin-B12 independent methionine synthase family. It depends on Zn(2+) as a cofactor.

It carries out the reaction 5-methyltetrahydropteroyltri-L-glutamate + L-homocysteine = tetrahydropteroyltri-L-glutamate + L-methionine. It participates in amino-acid biosynthesis; L-methionine biosynthesis via de novo pathway; L-methionine from L-homocysteine (MetE route): step 1/1. In terms of biological role, catalyzes the transfer of a methyl group from 5-methyltetrahydrofolate to homocysteine resulting in methionine formation. This is 5-methyltetrahydropteroyltriglutamate--homocysteine methyltransferase from Escherichia fergusonii (strain ATCC 35469 / DSM 13698 / CCUG 18766 / IAM 14443 / JCM 21226 / LMG 7866 / NBRC 102419 / NCTC 12128 / CDC 0568-73).